The following is a 332-amino-acid chain: MSLHLSNVILHQLCKNDQDELVVKLRPASLENDTSTENLVAELHRVFHSKAGKGFGSFQSDSEFQFWLQEMRKGERDFYDFSQISANRLKEELIKYPFADEGILVFAEYQSLATDYLFIGILPMNQSLKVTEGLDIDATDYLDITKMDIAARIDLSSYDTDRESNRYLSYIKGRVGRKVADFFLDFLQADVGLDTKQQNQVLMQAVEDFCADSKLEKQEANEYKKQVYNYCNEQIKSGDEVQISELSGELPPSQDGTSFMDFTKEQGYELEESFPGDRSTVRKLTKYVGAGGGLNISFDSLLLGERIFYDPETDTLTIKGTPPNLKDQLSRN.

This sequence belongs to the YejK family.

The protein resides in the cytoplasm. Its subcellular location is the nucleoid. This chain is Nucleoid-associated protein VIBHAR_03026, found in Vibrio campbellii (strain ATCC BAA-1116).